The primary structure comprises 92 residues: LYR motif-containing protein 4 homolog (92 aa).

Residues Ala-48–Val-68 adopt a coiled-coil conformation.

The protein belongs to the complex I LYR family. In terms of assembly, component of the mitochondrial core iron-sulfur cluster (ISC) assembly complex at least composed of the cysteine desulfurase Nfs1, the scaffold protein IscU, the accessory protein bcn92/Isd11/Lyrm4, and probably fh/frataxin. Interacts with Nfs1.

It localises to the mitochondrion. Functionally, stabilizing factor of the core iron-sulfur cluster (ISC) assembly complex that regulates the stability and cysteine desulfurase activity of Nfs1 and participates in the [2Fe-2S] clusters assembly on the scaffolding protein IscU. The chain is LYR motif-containing protein 4 homolog from Drosophila melanogaster (Fruit fly).